The following is a 484-amino-acid chain: Keratin, type I cytoskeletal 14 (484 aa).

Positions 1 to 20 are disordered; sequence MATCSRQFTSSSSMKGSCGI. The segment at 1-120 is head; sequence MATCSRQFTS…GIGDGLLVGS (120 aa). A coil 1A region spans residues 121 to 156; sequence EKVTMQNLNDRLATYLDKVRALEEANTELEVKIRDW. In terms of domain architecture, IF rod spans 121 to 432; the sequence is EKVTMQNLND…RLLEGEDAHL (312 aa). The linker 1 stretch occupies residues 157 to 174; the sequence is YQRQRPTEIKDYSPYFKT. The tract at residues 175 to 266 is coil 1B; it reads IEDLKSKILA…KNHEEEMASM (92 aa). Positions 267–289 are linker 12; the sequence is RGQVGGDVNVEMDAAPGVDLSRI. Residues 290–428 are coil 2; that stretch reads LNEMRDQYEK…ATYRRLLEGE (139 aa). Positions 429–484 are tail; sequence DAHLSSSQFSSSSQFSSGSQSSRDVTSTNRQIRTKVMDVHDGKVVSTHEQVLRTKN. The segment at 431 to 484 is interaction with Type I keratins and keratin filaments; sequence HLSSSQFSSSSQFSSGSQSSRDVTSTNRQIRTKVMDVHDGKVVSTHEQVLRTKN. Over residues 435 to 450 the composition is skewed to low complexity; that stretch reads SQFSSSSQFSSGSQSS. The disordered stretch occupies residues 435-457; that stretch reads SQFSSSSQFSSGSQSSRDVTSTN. Residue Ser447 is modified to Phosphoserine.

This sequence belongs to the intermediate filament family. In terms of assembly, heterotetramer of two type I and two type II keratins. Forms a disulfide-linked heterodimer (via 2B domains) with KRT5 (via 2B domains). Forms a heterodimer with KRT1; the interaction is more abundant in the absence of KRT5. Interacts with PLEC isoform 1C, when in a heterodimer with KRT5. Interacts with TRADD and with keratin filaments. Associates with other type I keratins. Interacts with EPPK1. Interacts with KLHL24. Interacts with PKP1 (via N-terminus) and PKP2. Post-translationally, a disulfide bond is formed between rather than within filaments and promotes the formation of a keratin filament cage around the nucleus. In terms of processing, ubiquitinated by the BCR(KLHL24) E3 ubiquitin ligase complex. Expressed in the corneal epithelium (at protein level). Expressed in the basal layer of the epidermis and the outer root sheath of hair follicles (at protein level). Expressed in the epithelial basal layer in the tail epidermis. Expressed in the parabasal cell row, basal cell layer, and suprabasal epithelial layer of the tongue.

The protein resides in the cytoplasm. The protein localises to the nucleus. Its function is as follows. The nonhelical tail domain is involved in promoting KRT5-KRT14 filaments to self-organize into large bundles and enhances the mechanical properties involved in resilience of keratin intermediate filaments in vitro. This is Keratin, type I cytoskeletal 14 (Krt14) from Mus musculus (Mouse).